A 154-amino-acid chain; its full sequence is Xanthine-guanine phosphoribosyltransferase (154 aa).

5-phospho-alpha-D-ribose 1-diphosphate contacts are provided by residues 37–38, Arg69, and 88–96; these read RG and EDLVDSGDT. Arg69 contacts GMP. Asp89 provides a ligand contact to Mg(2+). Positions 92 and 135 each coordinate guanine. 2 residues coordinate xanthine: Asp92 and Ile135. Residues 92–96 and 134–135 each bind GMP; these read DSGDT and WI.

It belongs to the purine/pyrimidine phosphoribosyltransferase family. XGPT subfamily. Homotetramer. Mg(2+) is required as a cofactor.

It is found in the cell inner membrane. The enzyme catalyses GMP + diphosphate = guanine + 5-phospho-alpha-D-ribose 1-diphosphate. It carries out the reaction XMP + diphosphate = xanthine + 5-phospho-alpha-D-ribose 1-diphosphate. It catalyses the reaction IMP + diphosphate = hypoxanthine + 5-phospho-alpha-D-ribose 1-diphosphate. Its pathway is purine metabolism; GMP biosynthesis via salvage pathway; GMP from guanine: step 1/1. It functions in the pathway purine metabolism; XMP biosynthesis via salvage pathway; XMP from xanthine: step 1/1. Functionally, purine salvage pathway enzyme that catalyzes the transfer of the ribosyl-5-phosphate group from 5-phospho-alpha-D-ribose 1-diphosphate (PRPP) to the N9 position of the 6-oxopurines guanine and xanthine to form the corresponding ribonucleotides GMP (guanosine 5'-monophosphate) and XMP (xanthosine 5'-monophosphate), with the release of PPi. To a lesser extent, also acts on hypoxanthine. This chain is Xanthine-guanine phosphoribosyltransferase, found in Vibrio vulnificus (strain CMCP6).